A 345-amino-acid polypeptide reads, in one-letter code: Dimethyladenosine transferase 1, mitochondrial (345 aa).

The N-terminal 27 residues, 1 to 27, are a transit peptide targeting the mitochondrion; sequence MAAPGKLSTCRLPPLPTIREIIKLFRL. Residues Leu38, Gly63, Glu85, Lys86, Asp111, Val112, and Asn141 each coordinate S-adenosyl-L-methionine.

Belongs to the class I-like SAM-binding methyltransferase superfamily. rRNA adenine N(6)-methyltransferase family. KsgA subfamily. Interacts with mitochondrial RNA polymerase POLRMT. Interacts with TFAM. Bound to the maturing mtSSU until the late stages of assembly.

The protein resides in the mitochondrion. It carries out the reaction adenosine(N)/adenosine(N+1) in rRNA + 4 S-adenosyl-L-methionine = N(6)-dimethyladenosine(N)/N(6)-dimethyladenosine(N+1) in rRNA + 4 S-adenosyl-L-homocysteine + 4 H(+). Its function is as follows. Mitochondrial methyltransferase which uses S-adenosyl methionine to dimethylate two highly conserved adjacent adenosine residues (A1583 and A1584) within the loop of helix 45 at the 3-prime end of 12S rRNA, thereby regulating the assembly or stability of the small subunit of the mitochondrial ribosome. Also required for basal transcription of mitochondrial DNA, probably via its interaction with POLRMT and TFAM. Stimulates transcription independently of the methyltransferase activity. The chain is Dimethyladenosine transferase 1, mitochondrial (TFB1M) from Macaca fascicularis (Crab-eating macaque).